The sequence spans 61 residues: Bacteriocin mesentericin Y105 (61 aa).

Positions 1–24 (MTNMKSVEAYQQLDNQNLKKVVGG) are cleaved as a signal peptide. A disulfide bridge connects residues C33 and C38.

The protein belongs to the bacteriocin class IIA/YGNGV family.

The protein localises to the secreted. Functionally, bacteriocin active against Listeria monocytogenes. The chain is Bacteriocin mesentericin Y105 (mesY) from Leuconostoc mesenteroides.